The chain runs to 354 residues: Alternative oxidase, mitochondrial (354 aa).

The transit peptide at 1 to 64 (MNSMSTTGPI…RFISSTPQSQ (64 aa)) directs the protein to the mitochondrion. The chain crosses the membrane as a helical span at residues 153-173 (FVFLESVAGVPGMVGGMLRHL). Residues E157, E196, and H199 each coordinate Fe cation. The helical transmembrane segment at 215–235 (LMVLGAQGVFFNGFFLSYLIS) threads the bilayer. The Fe cation site is built by E247, E302, and H305. Residues 333–354 (KPHPGKGIKHLKTTGWEREEVV) are disordered. The span at 335 to 344 (HPGKGIKHLK) shows a compositional bias: basic residues.

The protein belongs to the alternative oxidase family. Fe cation serves as cofactor.

It is found in the mitochondrion inner membrane. In terms of biological role, catalyzes cyanide-resistant oxygen consumption. May increase respiration when the cytochrome respiratory pathway is restricted, or in response to low temperatures. The sequence is that of Alternative oxidase, mitochondrial (alxA) from Emericella nidulans (strain FGSC A4 / ATCC 38163 / CBS 112.46 / NRRL 194 / M139) (Aspergillus nidulans).